Reading from the N-terminus, the 87-residue chain is Large ribosomal subunit protein eL33 (87 aa).

This sequence belongs to the eukaryotic ribosomal protein eL33 family.

The protein is Large ribosomal subunit protein eL33 of Pyrococcus woesei.